The primary structure comprises 144 residues: MTEVNINVTEIMEALPHRYPFLLVDRVIDIADDEITAIKNVTINEEFFQGHFPQYPVMPGVLIMEALAQAAGVLELSKPENKGKLVFYAGMDNVKYKKQVTPGDQLVLHAKFIKRRGPIAVVEAEATVDGKLAAKGTLTFALGK.

The active site involves H51.

Belongs to the thioester dehydratase family. FabZ subfamily.

It is found in the cytoplasm. It catalyses the reaction a (3R)-hydroxyacyl-[ACP] = a (2E)-enoyl-[ACP] + H2O. Functionally, involved in unsaturated fatty acids biosynthesis. Catalyzes the dehydration of short chain beta-hydroxyacyl-ACPs and long chain saturated and unsaturated beta-hydroxyacyl-ACPs. The sequence is that of 3-hydroxyacyl-[acyl-carrier-protein] dehydratase FabZ from Lactococcus lactis subsp. cremoris (strain SK11).